The primary structure comprises 433 residues: Elongation factor 1-alpha (433 aa).

Residues 5-220 (KPHINVVFIG…ALDMLKPPQL (216 aa)) enclose the tr-type G domain. Positions 14–21 (GHVDHGKS) are G1. 14-21 (GHVDHGKS) contacts GTP. Ser-21 is a binding site for Mg(2+). Residues 70 to 74 (GVTID) form a G2 region. Residues 91 to 94 (DAPG) form a G3 region. Residues 91–95 (DAPGH) and 146–149 (NKMD) contribute to the GTP site. A G4 region spans residues 146–149 (NKMD). The interval 186–188 (ASF) is G5.

The protein belongs to the TRAFAC class translation factor GTPase superfamily. Classic translation factor GTPase family. EF-Tu/EF-1A subfamily.

The protein resides in the cytoplasm. The catalysed reaction is GTP + H2O = GDP + phosphate + H(+). Its function is as follows. GTP hydrolase that promotes the GTP-dependent binding of aminoacyl-tRNA to the A-site of ribosomes during protein biosynthesis. The polypeptide is Elongation factor 1-alpha (Nanoarchaeum equitans (strain Kin4-M)).